The following is a 378-amino-acid chain: Mannitol-1-phosphate 5-dehydrogenase (378 aa).

4–15 lines the NAD(+) pocket; the sequence is SVHFGAGNIGRG.

It belongs to the mannitol dehydrogenase family.

It carries out the reaction D-mannitol 1-phosphate + NAD(+) = beta-D-fructose 6-phosphate + NADH + H(+). The chain is Mannitol-1-phosphate 5-dehydrogenase from Streptococcus pneumoniae (strain CGSP14).